We begin with the raw amino-acid sequence, 485 residues long: MPRFVDRVVIHARAGNGGNGCASVHREKFKPLGGPDGGNGGRGGSVILVVDPQVHTLLDFHFHPHVVAPSGKPGAGSNRDGAAGIDLEVRVPDGTVVLDENGRMLADLVGAGTRFEAAAGGRGGLGNAALASRARKAPGFALLGEKGQERDLTLELKTVADVGLIGFPSAGKSSLVSTISAAKPKIADYPFTTLVPNLGVVSAGENTYTVADVPGLIPGASEGRGLGLDFLRHLERCAVLVHVVDCATMEPGRDPISDIEALEAELAAYTPTLQGDSALGDLASRPRAVVLNKIDVPDARELADFVRDEVAGRFGWPVYEISTVSRDGLRPLIFALWEMVKKYRDAQPVAAPRRPIIRPIPVDESGFTISSDGEGGFIVRGTRPERWIAQTDFNNDEAVGYLGDRLARLGVEDELLKRGAKPGCAVTIGDVTFDWEPQTPAGVDVTMTGRGTDIRLEQTDRVGAAERKAARRERRQPGESGGEDS.

An Obg domain is found at 2–159 (PRFVDRVVIH…RDLTLELKTV (158 aa)). One can recognise an OBG-type G domain in the interval 160–341 (ADVGLIGFPS…LIFALWEMVK (182 aa)). Residues 166 to 173 (GFPSAGKS), 191 to 195 (FTTLV), 212 to 215 (DVPG), 292 to 295 (NKID), and 322 to 324 (STV) contribute to the GTP site. 2 residues coordinate Mg(2+): Ser-173 and Thr-193. The region spanning 359 to 437 (PIPVDESGFT…IGDVTFDWEP (79 aa)) is the OCT domain. The interval 450-485 (RGTDIRLEQTDRVGAAERKAARRERRQPGESGGEDS) is disordered. The segment covering 452 to 468 (TDIRLEQTDRVGAAERK) has biased composition (basic and acidic residues).

This sequence belongs to the TRAFAC class OBG-HflX-like GTPase superfamily. OBG GTPase family. In terms of assembly, monomer. Mg(2+) serves as cofactor.

It localises to the cytoplasm. An essential GTPase which binds GTP, GDP and possibly (p)ppGpp with moderate affinity, with high nucleotide exchange rates and a fairly low GTP hydrolysis rate. Plays a role in control of the cell cycle, stress response, ribosome biogenesis and in those bacteria that undergo differentiation, in morphogenesis control. The protein is GTPase Obg of Mycolicibacterium smegmatis (strain ATCC 700084 / mc(2)155) (Mycobacterium smegmatis).